The primary structure comprises 217 residues: Probable GTP-binding protein EngB (217 aa).

Positions 27–201 (EGIEVAFAGR…REKLDTWFSE (175 aa)) constitute an EngB-type G domain. GTP is bound by residues 35-42 (GRSNAGKS), 62-66 (GRTQL), 80-83 (DLPG), 147-150 (TKAD), and 180-182 (FSS). 2 residues coordinate Mg(2+): Ser-42 and Thr-64.

This sequence belongs to the TRAFAC class TrmE-Era-EngA-EngB-Septin-like GTPase superfamily. EngB GTPase family. Mg(2+) serves as cofactor.

Its function is as follows. Necessary for normal cell division and for the maintenance of normal septation. This Yersinia enterocolitica serotype O:8 / biotype 1B (strain NCTC 13174 / 8081) protein is Probable GTP-binding protein EngB.